We begin with the raw amino-acid sequence, 612 residues long: UvrABC system protein C (612 aa).

One can recognise a GIY-YIG domain in the interval 21-99 (HQPGVYRMYD…IKKYRPRYNV (79 aa)). In terms of domain architecture, UVR spans 208 to 243 (QQVIDELMNKMEQASTDLDFERAARFRDQIAALRKT).

This sequence belongs to the UvrC family. Interacts with UvrB in an incision complex.

Its subcellular location is the cytoplasm. In terms of biological role, the UvrABC repair system catalyzes the recognition and processing of DNA lesions. UvrC both incises the 5' and 3' sides of the lesion. The N-terminal half is responsible for the 3' incision and the C-terminal half is responsible for the 5' incision. This chain is UvrABC system protein C, found in Idiomarina loihiensis (strain ATCC BAA-735 / DSM 15497 / L2-TR).